Here is a 352-residue protein sequence, read N- to C-terminus: Putative [LysW]-L-2-aminoadipate/[LysW]-L-glutamate phosphate reductase (352 aa).

NADP(+) contacts are provided by residues 10–13 and 34–36; these read SGFT and SRK. Cys-151 is an active-site residue. Asn-319 is an NADP(+) binding site.

Belongs to the NAGSA dehydrogenase family. Type 1 subfamily. LysY sub-subfamily.

It localises to the cytoplasm. It carries out the reaction [amino-group carrier protein]-C-terminal-N-(1-carboxy-5-oxopentan-1-yl)-L-glutamine + phosphate + NADP(+) = [amino-group carrier protein]-C-terminal-N-(1-carboxy-5-phosphooxy-5-oxopentan-1-yl)-L-glutamine + NADPH + H(+). It catalyses the reaction [amino-group carrier protein]-C-terminal-gamma-(L-glutamyl-5-semialdehyde)-L-glutamate + phosphate + NADP(+) = [amino-group carrier protein]-C-terminal-gamma-(5-phospho-L-glutamyl)-L-glutamate + NADPH + H(+). It participates in amino-acid biosynthesis; L-lysine biosynthesis via AAA pathway; L-lysine from L-alpha-aminoadipate (Thermus route): step 3/5. It functions in the pathway amino-acid biosynthesis; L-arginine biosynthesis. Involved in both the arginine and lysine biosynthetic pathways. The chain is Putative [LysW]-L-2-aminoadipate/[LysW]-L-glutamate phosphate reductase from Pyrobaculum neutrophilum (strain DSM 2338 / JCM 9278 / NBRC 100436 / V24Sta) (Thermoproteus neutrophilus).